Consider the following 610-residue polypeptide: Serine/threonine-protein kinase RCK2 (610 aa).

Disordered stretches follow at residues 1–55 (MLKI…QDKN) and 99–127 (TSVP…SLSE). The span at 11–24 (KKPDQADLSQESKK) shows a compositional bias: basic and acidic residues. The segment covering 31-55 (RSSGTNNKDVSQITSSPKKSFQDKN) has biased composition (polar residues). Phosphoserine occurs at positions 46 and 50. One can recognise a Protein kinase domain in the interval 163 to 478 (YKLINKIGEG…IDQFLDDPWL (316 aa)). Residue 169 to 177 (IGEGAFSKV) coordinates ATP. At Ser-187 the chain carries Phosphoserine. Residue Lys-201 participates in ATP binding. Residue Asp-313 is the Proton acceptor of the active site. Thr-350 bears the Phosphothreonine mark. Positions 493–506 (KKAGTSERRHPHKK) are calmodulin-binding. Ser-520 carries the phosphoserine modification. The tract at residues 541-564 (EDRMGTRGGLGSLAEDEELEDSYS) is disordered.

It belongs to the protein kinase superfamily. CAMK Ser/Thr protein kinase family. CaMK subfamily. Post-translationally, autophosphorylated. Phosphorylated by HOG1 at Ser-520 after osmotic stress.

The protein resides in the cytoplasm. The catalysed reaction is L-seryl-[protein] + ATP = O-phospho-L-seryl-[protein] + ADP + H(+). It catalyses the reaction L-threonyl-[protein] + ATP = O-phospho-L-threonyl-[protein] + ADP + H(+). Activated by Ser-520 phosphorylation by HOG1. In terms of biological role, serine/threonine-protein kinase involved in a signal transduction pathway that is activated by changes in the osmolarity of the extracellular environment. The protein is Serine/threonine-protein kinase RCK2 (RCK2) of Saccharomyces cerevisiae (strain ATCC 204508 / S288c) (Baker's yeast).